A 235-amino-acid polypeptide reads, in one-letter code: 7-carboxy-7-deazaguanine synthase (235 aa).

Substrate contacts are provided by residues 25–27 (IQG) and Arg-40. The region spanning 31–235 (FTGTYSVFVR…PRLHLLVQLP (205 aa)) is the Radical SAM core domain. [4Fe-4S] cluster contacts are provided by Cys-44, Cys-48, and Cys-51. Mg(2+) is bound at residue Thr-53. Thr-85 contacts substrate. S-adenosyl-L-methionine is bound by residues Gly-87 and 135–137 (SPK). Pro-235 lines the substrate pocket.

The protein belongs to the radical SAM superfamily. 7-carboxy-7-deazaguanine synthase family. In terms of assembly, homodimer. [4Fe-4S] cluster serves as cofactor. The cofactor is S-adenosyl-L-methionine. It depends on Mg(2+) as a cofactor.

It catalyses the reaction 6-carboxy-5,6,7,8-tetrahydropterin + H(+) = 7-carboxy-7-deazaguanine + NH4(+). The protein operates within purine metabolism; 7-cyano-7-deazaguanine biosynthesis. Its function is as follows. Catalyzes the complex heterocyclic radical-mediated conversion of 6-carboxy-5,6,7,8-tetrahydropterin (CPH4) to 7-carboxy-7-deazaguanine (CDG), a step common to the biosynthetic pathways of all 7-deazapurine-containing compounds. The polypeptide is 7-carboxy-7-deazaguanine synthase (Hyperthermus butylicus (strain DSM 5456 / JCM 9403 / PLM1-5)).